The sequence spans 213 residues: Thymidylate kinase (213 aa).

11 to 18 (GGEGAGKT) is an ATP binding site.

The protein belongs to the thymidylate kinase family.

The enzyme catalyses dTMP + ATP = dTDP + ADP. Phosphorylation of dTMP to form dTDP in both de novo and salvage pathways of dTTP synthesis. The chain is Thymidylate kinase from Shouchella clausii (strain KSM-K16) (Alkalihalobacillus clausii).